Consider the following 374-residue polypeptide: Alginate lyase (374 aa).

An N-terminal signal peptide occupies residues 1-23 (MHKTRLALSCLLGSLLLSGAVHA). Substrate contacts are provided by residues 62–63 (SK), 135–136 (HT), and tyrosine 253.

The protein belongs to the polysaccharide lyase 5 family.

The protein localises to the periplasm. The catalysed reaction is Eliminative cleavage of alginate to give oligosaccharides with 4-deoxy-alpha-L-erythro-hex-4-enuronosyl groups at their non-reducing ends and beta-D-mannuronate at their reducing end.. In terms of biological role, catalyzes the depolymerization of alginate by cleaving the beta-1,4 glycosidic bond between two adjacent sugar residues via a beta-elimination mechanism. May serve to degrade mislocalized alginate that is trapped in the periplasmic space. This Azotobacter vinelandii (strain DJ / ATCC BAA-1303) protein is Alginate lyase.